Consider the following 74-residue polypeptide: uncharacterized protein (74 aa).

This is an uncharacterized protein from Bacillus subtilis (strain 168).